The primary structure comprises 433 residues: 3-phosphoshikimate 1-carboxyvinyltransferase (433 aa).

3-phosphoshikimate is bound by residues K20, S21, and R25. K20 serves as a coordination point for phosphoenolpyruvate. G92 and R121 together coordinate phosphoenolpyruvate. 3-phosphoshikimate contacts are provided by S167, S168, Q169, S195, D315, and K342. Q169 is a binding site for phosphoenolpyruvate. Residue D315 is the Proton acceptor of the active site. Positions 346 and 388 each coordinate phosphoenolpyruvate.

The protein belongs to the EPSP synthase family. Monomer.

It localises to the cytoplasm. It carries out the reaction 3-phosphoshikimate + phosphoenolpyruvate = 5-O-(1-carboxyvinyl)-3-phosphoshikimate + phosphate. Its pathway is metabolic intermediate biosynthesis; chorismate biosynthesis. Catalyzes the transfer of the enolpyruvyl moiety of phosphoenolpyruvate (PEP) to the 5-hydroxyl of shikimate-3-phosphate (S3P) to produce enolpyruvyl shikimate-3-phosphate and inorganic phosphate. This is 3-phosphoshikimate 1-carboxyvinyltransferase from Methanococcus aeolicus (strain ATCC BAA-1280 / DSM 17508 / OCM 812 / Nankai-3).